Reading from the N-terminus, the 121-residue chain is MDQLIQLVEATQAGVETPDIYPGDSVRIQLRVIEGEKERLQAFDGVVISDRGAGTNKTITVRKISHGVGVERIIPINSPNVESVTVLKHGKARRSKLFYLRKRTGKAALKVKERKVAEKAS.

The protein belongs to the bacterial ribosomal protein bL19 family.

Functionally, this protein is located at the 30S-50S ribosomal subunit interface and may play a role in the structure and function of the aminoacyl-tRNA binding site. The polypeptide is Large ribosomal subunit protein bL19 (Chlorobium phaeovibrioides (strain DSM 265 / 1930) (Prosthecochloris vibrioformis (strain DSM 265))).